The chain runs to 149 residues: Calmodulin (149 aa).

N-acetylalanine is present on Ala-2. EF-hand domains follow at residues 8 to 43 (EQIAEFKEAFSLFDKDGDGCITTKELGTVMRSLGQN), 44 to 79 (PTEAELQDMISEVDADQNGTIDFPEFLNLMARKMKD), 81 to 116 (DSEEELKEAFKVFDKDQNGFISAAELRHVMTNLGEK), and 117 to 149 (LTDEEVDEMIREADIDGDGQVNYEEFVRMMLAK). Residues Asp-21, Asp-23, Asp-25, Cys-27, Glu-32, Asp-57, Asp-59, Asn-61, Thr-63, Glu-68, Asp-94, Asp-96, Asn-98, and Glu-105 each contribute to the Ca(2+) site. Lys-116 is subject to N6,N6,N6-trimethyllysine. Asp-130, Asp-132, Asp-134, Gln-136, and Glu-141 together coordinate Ca(2+).

It belongs to the calmodulin family.

Calmodulin mediates the control of a large number of enzymes, ion channels and other proteins by Ca(2+). Among the enzymes to be stimulated by the calmodulin-Ca(2+) complex are a number of protein kinases and phosphatases. The protein is Calmodulin (CALM1) of Solanum lycopersicum (Tomato).